Consider the following 130-residue polypeptide: GAWNGRLGCGCGGIAPAAELAASYGGGLGVASASAIPPVGLGVASENAYEGCVEVAGNLPFLGTAGVEGVFPTAGAGVINYGCGNGALGITAERGYGAGIGYEGLGLGYGAGIGYKGYGLGGCGCGCGRL.

Positions 1-22 are left arm; sequence GAWNGRLGCGCGGIAPAAELAA. Residues 23 to 93 form a central domain region; sequence SYGGGLGVAS…GNGALGITAE (71 aa). The tract at residues 94–130 is right arm (Gly-rich tandem repeats); that stretch reads RGYGAGIGYEGLGLGYGAGIGYKGYGLGGCGCGCGRL.

The protein belongs to the chorion protein family.

Functionally, this protein is one of many from the eggshell of the silk moth. The polypeptide is Chorion class B protein PC10 (Antheraea polyphemus (Polyphemus moth)).